Here is a 102-residue protein sequence, read N- to C-terminus: MAKGQSLQDPFLNALRRERVPVSIYLVNGIKLQGQIESFDQFVILLKNTVSQMVYKHAISTVVPSRPVSHHSNNTGGGSNNYHHGSSPAPSSQPQQDSADAE.

Residues 9–68 (DPFLNALRRERVPVSIYLVNGIKLQGQIESFDQFVILLKNTVSQMVYKHAISTVVPSRPV) enclose the Sm domain. Residues 63–102 (VPSRPVSHHSNNTGGGSNNYHHGSSPAPSSQPQQDSADAE) form a disordered region. Positions 70–102 (HHSNNTGGGSNNYHHGSSPAPSSQPQQDSADAE) are enriched in low complexity.

This sequence belongs to the Hfq family. In terms of assembly, homohexamer.

Functionally, RNA chaperone that binds small regulatory RNA (sRNAs) and mRNAs to facilitate mRNA translational regulation in response to envelope stress, environmental stress and changes in metabolite concentrations. Also binds with high specificity to tRNAs. The chain is RNA-binding protein Hfq from Erwinia tasmaniensis (strain DSM 17950 / CFBP 7177 / CIP 109463 / NCPPB 4357 / Et1/99).